Reading from the N-terminus, the 880-residue chain is Alanine--tRNA ligase (880 aa).

Residues histidine 568, histidine 572, cysteine 670, and histidine 674 each contribute to the Zn(2+) site.

This sequence belongs to the class-II aminoacyl-tRNA synthetase family. The cofactor is Zn(2+).

It is found in the cytoplasm. It carries out the reaction tRNA(Ala) + L-alanine + ATP = L-alanyl-tRNA(Ala) + AMP + diphosphate. Functionally, catalyzes the attachment of alanine to tRNA(Ala) in a two-step reaction: alanine is first activated by ATP to form Ala-AMP and then transferred to the acceptor end of tRNA(Ala). Also edits incorrectly charged Ser-tRNA(Ala) and Gly-tRNA(Ala) via its editing domain. The sequence is that of Alanine--tRNA ligase from Enterococcus faecalis (strain ATCC 700802 / V583).